An 86-amino-acid polypeptide reads, in one-letter code: Large ribosomal subunit protein uL23 (86 aa).

The protein belongs to the universal ribosomal protein uL23 family. In terms of assembly, part of the 50S ribosomal subunit. Contacts protein L29.

Its function is as follows. Binds to 23S rRNA. One of the proteins that surrounds the polypeptide exit tunnel on the outside of the ribosome. The polypeptide is Large ribosomal subunit protein uL23 (Pyrococcus horikoshii (strain ATCC 700860 / DSM 12428 / JCM 9974 / NBRC 100139 / OT-3)).